A 380-amino-acid polypeptide reads, in one-letter code: Enoyl-[acyl-carrier-protein] reductase, mitochondrial (380 aa).

A mitochondrion-targeting transit peptide spans 1-9 (MLPTFKRYM). The active-site Proton donor is the Y73. NADP(+) is bound by residues N157, 185-188 (TSSV), 208-210 (RDR), 283-286 (YGGM), and 308-310 (YWV). Position 339 is a phosphoserine (S339). An NADP(+)-binding site is contributed by K373.

Belongs to the zinc-containing alcohol dehydrogenase family. Quinone oxidoreductase subfamily. Homodimer or in a complex with other proteins. Interacts with ARS1.

The protein localises to the mitochondrion matrix. The catalysed reaction is a 2,3-saturated acyl-[ACP] + NADP(+) = a (2E)-enoyl-[ACP] + NADPH + H(+). The enzyme catalyses (2E,4E)-hexadienoyl-CoA + NADPH + H(+) = (4E)-hexenoyl-CoA + NADP(+). It carries out the reaction (2E)-hexenoyl-CoA + NADPH + H(+) = hexanoyl-CoA + NADP(+). Its function is as follows. Catalyzes the NADPH-dependent reduction of trans-2-enoyl thioesters in mitochondrial fatty acid synthesis (fatty acid synthesis type II). Fatty acid chain elongation in mitochondria uses acyl carrier protein (ACP) as an acyl group carrier, but the enzyme accepts both ACP and CoA thioesters as substrates in vitro. Required for respiration and the maintenance of the mitochondrial compartment. The protein is Enoyl-[acyl-carrier-protein] reductase, mitochondrial (ETR1) of Saccharomyces cerevisiae (strain ATCC 204508 / S288c) (Baker's yeast).